A 594-amino-acid polypeptide reads, in one-letter code: Sucrose transport protein SUC3 (594 aa).

Serine 2 is subject to N-acetylserine. Topologically, residues 2–58 (SDSVSISVPYRNLRKEIELETVTKHRQNESGSSSFSESASPSNHSDSADGESVSKNC) are cytoplasmic. A disordered region spans residues 23–50 (VTKHRQNESGSSSFSESASPSNHSDSAD). The span at 31–46 (SGSSSFSESASPSNHS) shows a compositional bias: low complexity. The helical transmembrane segment at 59–79 (SLVTLVLSCTVAAGVQFGWAL) threads the bilayer. The Extracellular segment spans residues 80-98 (QLSLLTPYIQTLGISHAFS). A helical membrane pass occupies residues 99-119 (SFIWLCGPITGLVVQPFVGIW). Topologically, residues 120–131 (SDKCTSKYGRRR) are cytoplasmic. A helical membrane pass occupies residues 132-152 (PFILVGSFMISIAVIIIGFSA). Residues 153–174 (DIGYLLGDSKEHCSTFKGTRTR) are Extracellular-facing. Residues 175–195 (AAVVFIIGFWLLDLANNTVQG) traverse the membrane as a helical segment. The Cytoplasmic segment spans residues 196-214 (PARALLADLSGPDQRNTAN). A helical transmembrane segment spans residues 215 to 235 (AVFCLWMAIGNILGFSAGASG). At 236-257 (KWQEWFPFLTSRACCAACGNLK) the chain is on the extracellular side. A helical membrane pass occupies residues 258–278 (AAFLLAVVFLTICTLVTIYFA). At 279-365 (KEIPFTSNKP…LTSLRHLPPA (87 aa)) the chain is on the cytoplasmic side. The helical transmembrane segment at 366–386 (MHSVLIVMALTWLSWFPFFLF) threads the bilayer. At 387–417 (DTDWMGREVYHGDPTGDSLHMELYDQGVREG) the chain is on the extracellular side. The helical transmembrane segment at 418–438 (ALGLLLNSVVLGISSFLIEPM) threads the bilayer. Over 439–445 (CQRMGAR) the chain is Cytoplasmic. The chain crosses the membrane as a helical span at residues 446–466 (VVWALSNFTVFACMAGTAVIS). At 467-489 (LMSLSDDKNGIEYIMRGNETTRT) the chain is on the extracellular side. Asparagine 484 is a glycosylation site (N-linked (GlcNAc...) asparagine). Residues 490-510 (AAVIVFALLGFPLAITYSVPF) traverse the membrane as a helical segment. At 511–525 (SVTAEVTADSGGGQG) the chain is on the cytoplasmic side. A helical transmembrane segment spans residues 526 to 546 (LAIGVLNLAIVIPQMIVSLGA). The Extracellular portion of the chain corresponds to 547 to 555 (GPWDQLFGG). A helical transmembrane segment spans residues 556 to 576 (GNLPAFVLASVAAFAAGVIAL). Residues 577 to 594 (QRLPTLSSSFKSTGFHIG) lie on the Cytoplasmic side of the membrane.

Belongs to the glycoside-pentoside-hexuronide (GPH) cation symporter transporter (TC 2.A.2.4) family. Homodimer. Interacts with SUC2 and SUC4. In terms of tissue distribution, mostly localized in parenchymatic cells next to vascular tissues (at protein level). Present in stipules, trichomes, hydathodes and guard cells of source leaves, as well as in lateral root tips and flowers.

It localises to the cell membrane. It carries out the reaction sucrose(out) + H(+)(out) = sucrose(in) + H(+)(in). It functions in the pathway glycan biosynthesis; sucrose metabolism. Its activity is regulated as follows. Inhibited by protonophores (e.g. dinitrophenol and carbonyl cyanide m-chlorophenyl-hydrazone (CCCP)) and SH group inhibitors (e.g. p-chloromercuribenzene sulphonic acid (PCMBS)). In terms of biological role, responsible for the transport of sucrose into the cell, with the concomitant uptake of protons (symport system). Can also transport maltose at a lesser rate. May also transport biotin. Probably involved in carpel maturation that leads to pod shatter and seed dispersal. This is Sucrose transport protein SUC3 from Arabidopsis thaliana (Mouse-ear cress).